The primary structure comprises 87 residues: Large ribosomal subunit protein bL31B (87 aa).

Belongs to the bacterial ribosomal protein bL31 family. Type B subfamily. Part of the 50S ribosomal subunit.

This chain is Large ribosomal subunit protein bL31B, found in Escherichia coli O8 (strain IAI1).